The chain runs to 32 residues: Small ribosomal subunit protein uS19 (32 aa).

This sequence belongs to the universal ribosomal protein uS19 family.

In terms of biological role, protein S19 forms a complex with S13 that binds strongly to the 16S ribosomal RNA. This is Small ribosomal subunit protein uS19 (rpsS) from Yersinia enterocolitica.